Here is a 289-residue protein sequence, read N- to C-terminus: Probable protein phosphatase 2C 39 (289 aa).

The region spanning 41 to 288 (THGFHLVKGK…DDISVVVVKF (248 aa)) is the PPM-type phosphatase domain. 4 residues coordinate Mn(2+): Asp78, Gly79, Asp240, and Asp279.

This sequence belongs to the PP2C family. The cofactor is Mg(2+). Mn(2+) serves as cofactor.

The enzyme catalyses O-phospho-L-seryl-[protein] + H2O = L-seryl-[protein] + phosphate. It catalyses the reaction O-phospho-L-threonyl-[protein] + H2O = L-threonyl-[protein] + phosphate. This chain is Probable protein phosphatase 2C 39, found in Arabidopsis thaliana (Mouse-ear cress).